A 509-amino-acid polypeptide reads, in one-letter code: Angiopoietin-4 (509 aa).

Positions 1–21 (MLCQPAMLLDGLLLLATMAAA) are cleaved as a signal peptide. Asparagine 105, asparagine 135, asparagine 149, asparagine 167, asparagine 256, asparagine 306, asparagine 317, and asparagine 417 each carry an N-linked (GlcNAc...) asparagine glycan. Residues 181–269 (LSTNKLERQM…LQQQQQQLTE (89 aa)) adopt a coiled-coil conformation. One can recognise a Fibrinogen C-terminal domain in the interval 288–508 (KTPKPVFQDC…GTRMMLRPMG (221 aa)). A disulfide bridge links cysteine 297 with cysteine 326. Residues 416-436 (VNDSSSSAGRKNSLAPQGTKF) form a disordered region. A disulfide bond links cysteine 450 and cysteine 463.

As to quaternary structure, homodimer; disulfide-linked. Interacts with TEK/TIE2. Widely expressed.

Its subcellular location is the secreted. Its function is as follows. Binds to TEK/TIE2, modulating ANGPT1 signaling. Can induce tyrosine phosphorylation of TEK/TIE2. Promotes endothelial cell survival, migration and angiogenesis. The protein is Angiopoietin-4 (Angpt4) of Mus musculus (Mouse).